The chain runs to 785 residues: Disintegrin and metalloproteinase domain-containing protein B (785 aa).

An N-terminal signal peptide occupies residues 1–26 (MRFLKSALPFVASALSLLSVQAAARS). The Extracellular portion of the chain corresponds to 27-703 (QEPSAIQHVS…GSWVEQHKNL (677 aa)). One can recognise a Peptidase M12B domain in the interval 279–507 (KQVALVGIAA…NSVKSSCLSD (229 aa)). N-linked (GlcNAc...) asparagine glycosylation is found at asparagine 322, asparagine 329, and asparagine 355. 2 disulfides stabilise this stretch: cysteine 398–cysteine 492 and cysteine 446–cysteine 464. Histidine 429 lines the Zn(2+) pocket. Glutamate 430 is a catalytic residue. Residues histidine 433 and histidine 439 each contribute to the Zn(2+) site. The 90-residue stretch at 516 to 605 (GSQCGNGIVE…TCPADSFKKD (90 aa)) folds into the Disintegrin domain. 3 N-linked (GlcNAc...) asparagine glycosylation sites follow: asparagine 561, asparagine 593, and asparagine 640. Cysteines 577 and 597 form a disulfide. A helical membrane pass occupies residues 704 to 724 (VIGVACGVGGLLVLSILWCMI). At 725–785 (NRCRRARTVV…GPYQSATRYA (61 aa)) the chain is on the cytoplasmic side. Residues 737 to 785 (PPMRPWPGPMPPPPPQMGQWAGPNRGYQGLRAEPPPPYPGPYQSATRYA) are disordered. A compositionally biased stretch (pro residues) spans 739–752 (MRPWPGPMPPPPPQ).

Zn(2+) is required as a cofactor.

It localises to the membrane. In terms of biological role, probable zinc protease. The protein is Disintegrin and metalloproteinase domain-containing protein B (ADM-B) of Aspergillus fumigatus (strain ATCC MYA-4609 / CBS 101355 / FGSC A1100 / Af293) (Neosartorya fumigata).